We begin with the raw amino-acid sequence, 167 residues long: G/U mismatch-specific DNA glycosylase (167 aa).

It belongs to the uracil-DNA glycosylase (UDG) superfamily. TDG/mug family. Binds DNA as a monomer.

It localises to the cytoplasm. It carries out the reaction Specifically hydrolyzes mismatched double-stranded DNA and polynucleotides, releasing free uracil.. Functionally, excises ethenocytosine and uracil, which can arise by alkylation or deamination of cytosine, respectively, from the corresponding mispairs with guanine in ds-DNA. It is capable of hydrolyzing the carbon-nitrogen bond between the sugar-phosphate backbone of the DNA and the mispaired base. The complementary strand guanine functions in substrate recognition. Required for DNA damage lesion repair in stationary-phase cells. The sequence is that of G/U mismatch-specific DNA glycosylase from Pectobacterium atrosepticum (strain SCRI 1043 / ATCC BAA-672) (Erwinia carotovora subsp. atroseptica).